Here is a 186-residue protein sequence, read N- to C-terminus: Large ribosomal subunit protein uL5 (186 aa).

It belongs to the universal ribosomal protein uL5 family. As to quaternary structure, part of the 50S ribosomal subunit; part of the 5S rRNA/L5/L18/L25 subcomplex. Contacts the 5S rRNA and the P site tRNA. Forms a bridge to the 30S subunit in the 70S ribosome.

Its function is as follows. This is one of the proteins that bind and probably mediate the attachment of the 5S RNA into the large ribosomal subunit, where it forms part of the central protuberance. In the 70S ribosome it contacts protein S13 of the 30S subunit (bridge B1b), connecting the 2 subunits; this bridge is implicated in subunit movement. Contacts the P site tRNA; the 5S rRNA and some of its associated proteins might help stabilize positioning of ribosome-bound tRNAs. This chain is Large ribosomal subunit protein uL5, found in Maricaulis maris (strain MCS10) (Caulobacter maris).